We begin with the raw amino-acid sequence, 102 residues long: Small ribosomal subunit protein eS24 (102 aa).

Belongs to the eukaryotic ribosomal protein eS24 family.

The chain is Small ribosomal subunit protein eS24 from Methanobrevibacter smithii (strain ATCC 35061 / DSM 861 / OCM 144 / PS).